The sequence spans 1009 residues: Membrane alanyl aminopeptidase (1009 aa).

The first 15 residues, 1-15 (MAAIKLLVLSLACAC), serve as a signal peptide directing secretion. Positions 16 to 52 (VIAHSPIPPASRTIFLDERLEGGAFENIDAFENIELS) are cleaved as a propeptide — activation peptide. 338–342 (GAMEN) serves as a coordination point for substrate. His-374 is a Zn(2+) binding site. Catalysis depends on Glu-375, which acts as the Proton acceptor. Residues His-378 and Glu-397 each coordinate Zn(2+). N-linked (GlcNAc...) asparagine glycosylation is present at Asn-906. Residues 955–980 (PSTSTTSTTAAPTTVTQPTITEPSTP) form a disordered region. The GPI-anchor amidated aspartate moiety is linked to residue Asp-987. Positions 988–1009 (SAMTSFASLFIISLGAILHLIL) are cleaved as a propeptide — removed in mature form.

Belongs to the peptidase M1 family. Zn(2+) is required as a cofactor.

The protein resides in the cell membrane. Its function is as follows. Binds to the B.thuringiensis toxin, CryIA(C). This Heliothis virescens (Tobacco budworm moth) protein is Membrane alanyl aminopeptidase.